We begin with the raw amino-acid sequence, 206 residues long: Elongation factor 1-beta (206 aa).

Ala2 is subject to N-acetylalanine. Lys13 participates in a covalent cross-link: Glycyl lysine isopeptide (Lys-Gly) (interchain with G-Cter in ubiquitin). Phosphoserine occurs at positions 31 and 86.

The protein belongs to the EF-1-beta/EF-1-delta family. As to quaternary structure, the eukaryotic elongation factor 1 complex (eEF1) is probably a heterohexamer. Two trimeric complexes, each composed of eEF1A (TEF1 or TEF2), eEF1Balpha (EFB1) and eEF1Bgamma (CAM1 or TEF4), are probably dimerized via the eF1Bgamma subunits. eEF1Balpha interacts directly with eEF1A. eEF1Balpha and eEF1Bgamma form the eEF1B subcomplex with the GEF activity. S-thiolated in response to oxidative stress, probably inhibiting the protein and causing a reduction in protein synthesis.

The protein operates within protein biosynthesis; polypeptide chain elongation. Functionally, catalytic subunit of the guanine nucleotide exchange factor (GEF) (eEF1B subcomplex) of the eukaryotic elongation factor 1 complex (eEF1). Stimulates the exchange of GDP for GTP on elongation factor 1A (eEF1A), probably by displacing GDP from the nucleotide binding pocket in eEF1A. The 30-fold higher concentration of GTP compared to GDP in cells favors the formation of eEF1A-GTP, which rapidly forms a ternary complex with aminoacyl-tRNA that in turn displaces eEF1B from the complex. In Saccharomyces cerevisiae (strain ATCC 204508 / S288c) (Baker's yeast), this protein is Elongation factor 1-beta (EFB1).